Reading from the N-terminus, the 338-residue chain is Glycerol-3-phosphate dehydrogenase [NAD(P)+] (338 aa).

Residues S12, W13, and K110 each coordinate NADPH. Positions 110, 141, and 143 each coordinate sn-glycerol 3-phosphate. A145 serves as a coordination point for NADPH. K196, D249, S259, R260, and N261 together coordinate sn-glycerol 3-phosphate. Catalysis depends on K196, which acts as the Proton acceptor. R260 provides a ligand contact to NADPH. NADPH contacts are provided by V284 and E286.

This sequence belongs to the NAD-dependent glycerol-3-phosphate dehydrogenase family.

It localises to the cytoplasm. It catalyses the reaction sn-glycerol 3-phosphate + NAD(+) = dihydroxyacetone phosphate + NADH + H(+). The enzyme catalyses sn-glycerol 3-phosphate + NADP(+) = dihydroxyacetone phosphate + NADPH + H(+). The protein operates within membrane lipid metabolism; glycerophospholipid metabolism. Functionally, catalyzes the reduction of the glycolytic intermediate dihydroxyacetone phosphate (DHAP) to sn-glycerol 3-phosphate (G3P), the key precursor for phospholipid synthesis. This Lactiplantibacillus plantarum (strain ATCC BAA-793 / NCIMB 8826 / WCFS1) (Lactobacillus plantarum) protein is Glycerol-3-phosphate dehydrogenase [NAD(P)+].